Reading from the N-terminus, the 124-residue chain is Large ribosomal subunit protein bL12 (124 aa).

This sequence belongs to the bacterial ribosomal protein bL12 family. As to quaternary structure, homodimer. Part of the ribosomal stalk of the 50S ribosomal subunit. Forms a multimeric L10(L12)X complex, where L10 forms an elongated spine to which 2 to 4 L12 dimers bind in a sequential fashion. Binds GTP-bound translation factors.

Functionally, forms part of the ribosomal stalk which helps the ribosome interact with GTP-bound translation factors. Is thus essential for accurate translation. The sequence is that of Large ribosomal subunit protein bL12 from Dehalococcoides mccartyi (strain ATCC BAA-2266 / KCTC 15142 / 195) (Dehalococcoides ethenogenes (strain 195)).